The chain runs to 1489 residues: Type-2 histone deacetylase 1 (1489 aa).

Composition is skewed to low complexity over residues 135–163, 190–259, 281–306, and 325–399; these read NNNNINNNNNSNGSNSSNNSHNGGSSPSG, SNGN…SRNL, NIINNNSNNNTNNNNNIMNGTTTSTT, and SPTS…NINN. 5 disordered regions span residues 135 to 259, 281 to 556, 915 to 935, 955 to 1024, and 1151 to 1185; these read NNNN…SRNL, NIIN…NYQQ, NNNNNNNNNNNNNNNEEDDQL, NISK…RDRD, and STGINQFSTSTPITTTGTATVTPGSTTSSTNGEQC. Residues 400–430 are compositionally biased toward polar residues; it reads VANGTPRPSLQTSRLQGKLPSPQQYNTSPSH. Composition is skewed to low complexity over residues 431–450, 486–553, 915–928, and 959–988; these read QQYPSPKNNNNSNNIIPIQS, NNNN…NNSN, NNNNNNNNNNNNNN, and NNNNNNNNNNNNNNNNNNNNNNNNNNNNNN. Basic and acidic residues-rich tracts occupy residues 989–1001 and 1010–1024; these read RNRDRDREFERDN and IEKERNRNNRIRDRD. Low complexity predominate over residues 1158–1180; the sequence is STSTPITTTGTATVTPGSTTSST. His-1232 (proton acceptor) is an active-site residue. Acidic residues predominate over residues 1325 to 1335; that stretch reads EQNDYDDDDNN. Positions 1325–1374 are disordered; that stretch reads EQNDYDDDDNNNDVNNNNNNNNNNNNNNNNNNNNKNNNNNNSNSITQQST. Positions 1336-1367 are enriched in low complexity; it reads NDVNNNNNNNNNNNNNNNNNNNNKNNNNNNSN.

It belongs to the histone deacetylase family. HD type 2 subfamily.

It localises to the nucleus. Its subcellular location is the cytoplasm. The catalysed reaction is N(6)-acetyl-L-lysyl-[histone] + H2O = L-lysyl-[histone] + acetate. Its function is as follows. Responsible for the deacetylation of lysine residues on the N-terminal part of the core histones (H2A, H2B, H3 and H4). Histone deacetylation plays an important role in transcriptional regulation, cell cycle progression and developmental events. Histone deacetylases act via the formation of large multiprotein complexes. The sequence is that of Type-2 histone deacetylase 1 (hdaD) from Dictyostelium discoideum (Social amoeba).